The sequence spans 305 residues: Serine/threonine-protein phosphatase ppe1 (305 aa).

The Mn(2+) site is built by Asp51, His53, Asp79, and Asn111. Residue His112 is the Proton donor of the active site. Residues His161 and His235 each contribute to the Mn(2+) site.

It belongs to the PPP phosphatase family. PP-6 (PP-V) subfamily. In terms of assembly, interacts with sts5, ekc1 and mis12. It depends on Mn(2+) as a cofactor.

Its subcellular location is the nucleus. It catalyses the reaction O-phospho-L-seryl-[protein] + H2O = L-seryl-[protein] + phosphate. It carries out the reaction O-phospho-L-threonyl-[protein] + H2O = L-threonyl-[protein] + phosphate. Has a role in chromosome segregation. May provide a dynamic connection between kinetochore microtubules and kinetochore chromatin. Negatively regulates mis12. The chain is Serine/threonine-protein phosphatase ppe1 (ppe1) from Schizosaccharomyces pombe (strain 972 / ATCC 24843) (Fission yeast).